The following is a 326-amino-acid chain: L-threo-3-hydroxyaspartate ammonia-lyase (326 aa).

Residue Lys-53 is modified to N6-(pyridoxal phosphate)lysine. Pyridoxal 5'-phosphate-binding positions include Asn-80, 179–183, and Ser-304; that span reads GGGGL.

This sequence belongs to the serine/threonine dehydratase family. In terms of assembly, monomer. It depends on pyridoxal 5'-phosphate as a cofactor. Requires Mn(2+) as cofactor. The cofactor is Mg(2+). Ca(2+) serves as cofactor.

It catalyses the reaction (3S)-3-hydroxy-L-aspartate = oxaloacetate + NH4(+). Its activity is regulated as follows. Is strongly inhibited by hydroxylamine and EDTA in vitro. In terms of biological role, catalyzes the deamination of L-threo-3-hydroxyaspartate to oxaloacetate and ammonia. Shows a high specificity towards L-threo-3-hydroxyaspartate as other 3-hydroxyaminoacids, i.e. D,L-erythro- and D-threo-3-hydroxyaspartate, D-threonine, L-threonine, D,L-allothreonine, D-serine, and L-serine, are not substrates for this enzyme. Exhibits no detectable serine racemase activity. Is responsible for the 3-hydroxyaspartate resistance of S.cerevisiae, and thus may be involved in the detoxification of naturally occurring 3-hydroxyaspartate. This is L-threo-3-hydroxyaspartate ammonia-lyase (SRY1) from Saccharomyces cerevisiae (strain ATCC 204508 / S288c) (Baker's yeast).